The following is a 218-amino-acid chain: MGQKINPLGFRLGTTQGHHSLWFAQPKNYSKGLQEDQKIRDCIKNYVQKNIRISSGVEGIARIEIQKRIDLIQVIIYMGFPKLLVEGKPRRIEELQMNVQKELNYVNRKLNIAITRITKPYGHPNILAEFIAGQLRNRVSFRKAIKKAIELTEQADTKGIQVQIAGRIDGKEIARVEWIREGRVPLQTIRAKIDYCSYRVRTIYGVLGIKIWIFVDEE.

A KH type-2 domain is found at 47 to 118; it reads VQKNIRISSG…KLNIAITRIT (72 aa).

The protein belongs to the universal ribosomal protein uS3 family. In terms of assembly, part of the 30S ribosomal subunit.

The protein localises to the plastid. It localises to the chloroplast. The protein is Small ribosomal subunit protein uS3c (rps3) of Vitis vinifera (Grape).